Consider the following 333-residue polypeptide: Atrochrysone carboxyl ACP thioesterase (333 aa).

Residues His104, His106, Asp108, and His109 each coordinate Zn(2+). Asp108 serves as the catalytic Proton donor/acceptor.

It belongs to the metallo-beta-lactamase superfamily. Zn(2+) is required as a cofactor.

The enzyme catalyses atrochrysone carboxyl-[ACP] + H2O = atrochrysone carboxylate + holo-[ACP] + H(+). The protein operates within pigment biosynthesis. Functionally, atrochrysone carboxyl ACP thioesterase; part of the gene cluster that mediates the biosynthesis of the bianthraquinone cladofulvin, a conidial pigment not required for virulence but that plays a role in fitness and resistance to environmental stresses including UV light and low-temperature stress. The pathway begins with the synthesis of atrochrysone thioester by the polyketide synthase (PKS) claG. The atrochrysone carboxyl ACP thioesterase claF then breaks the thioester bond and releases the atrochrysone carboxylic acid from claG. This compound is decarboxylated by claH to yield emodin, which is further converted to chrysophanol hydroquinone by the reductase claC and the dehydratase claB. The cytochrome P450 monooxygenase claM then catalyzes the dimerization of nataloe-emodin to cladofulvin. In Passalora fulva (Tomato leaf mold), this protein is Atrochrysone carboxyl ACP thioesterase.